The chain runs to 187 residues: Interferon beta (187 aa).

The first 21 residues, 1 to 21 (MTNKCLLQIALLLCFSTTALS), serve as a signal peptide directing secretion. Position 24 is a phosphotyrosine (tyrosine 24). Cysteine 52 and cysteine 162 are oxidised to a cystine. A glycan (N-linked (GlcNAc...) asparagine) is linked at asparagine 101.

The protein belongs to the alpha/beta interferon family. Monomer.

It localises to the secreted. Functionally, type I interferon cytokine that plays a key role in the innate immune response to infection, developing tumors and other inflammatory stimuli. Signals via binding to high-affinity (IFNAR2) and low-affinity (IFNAR1) heterodimeric receptor, activating the canonical Jak-STAT signaling pathway resulting in transcriptional activation or repression of interferon-regulated genes that encode the effectors of the interferon response, such as antiviral proteins, regulators of cell proliferation and differentiation, and immunoregulatory proteins. Signals mostly via binding to a IFNAR1-IFNAR2 heterodimeric receptor, but can also function with IFNAR1 alone and independently of Jak-STAT pathways. Elicits a wide variety of responses, including antiviral and antibacterial activities, and can regulate the development of B-cells, myelopoiesis and lipopolysaccharide (LPS)-inducible production of tumor necrosis factor. Plays a role in neuronal homeostasis by regulating dopamine turnover and protecting dopaminergic neurons: acts by promoting neuronal autophagy and alpha-synuclein clearance, thereby preventing dopaminergic neuron loss. IFNB1 is more potent than interferon-alpha (IFN-alpha) in inducing the apoptotic and antiproliferative pathways required for control of tumor cell growth. The protein is Interferon beta (IFNB1) of Macaca fascicularis (Crab-eating macaque).